The following is a 474-amino-acid chain: C6 finger domain transcription factor aclZ (474 aa).

The zn(2)-C6 fungal-type DNA-binding region spans 42 to 69; that stretch reads CNQCHAAKVRCSGERTGCDRCNNLQYQC. Disordered stretches follow at residues 85–148 and 177–206; these read RGNK…SHSA and MSSDQDPSRSRGHSLQAPSHSGHSIADSHT. A compositionally biased stretch (polar residues) spans 90 to 105; sequence VRTTTEALQRPATAST. Residues 117-138 are compositionally biased toward basic and acidic residues; it reads TDQRSENDPLSRSDFGEQDAAH.

It localises to the nucleus. Its function is as follows. Transcription factor that specifically regulates the gene cluster that mediates the biosynthesis of aspirochlorine (or antibiotic A30641), an unusual halogenated spiro compound with distinctive antifungal properties due to selective inhibition of protein biosynthesis, and which is also active against bacteria, viruses, and murine tumor cells. The polypeptide is C6 finger domain transcription factor aclZ (Aspergillus oryzae (strain ATCC 42149 / RIB 40) (Yellow koji mold)).